A 333-amino-acid polypeptide reads, in one-letter code: Acetyl-coenzyme A carboxylase carboxyl transferase subunit alpha (333 aa).

A CoA carboxyltransferase C-terminal domain is found at 48–308; that stretch reads LLEQKVDALR…KEMLVEELRD (261 aa).

Belongs to the AccA family. Acetyl-CoA carboxylase is a heterohexamer composed of biotin carboxyl carrier protein (AccB), biotin carboxylase (AccC) and two subunits each of ACCase subunit alpha (AccA) and ACCase subunit beta (AccD).

Its subcellular location is the cytoplasm. The catalysed reaction is N(6)-carboxybiotinyl-L-lysyl-[protein] + acetyl-CoA = N(6)-biotinyl-L-lysyl-[protein] + malonyl-CoA. It participates in lipid metabolism; malonyl-CoA biosynthesis; malonyl-CoA from acetyl-CoA: step 1/1. Component of the acetyl coenzyme A carboxylase (ACC) complex. First, biotin carboxylase catalyzes the carboxylation of biotin on its carrier protein (BCCP) and then the CO(2) group is transferred by the carboxyltransferase to acetyl-CoA to form malonyl-CoA. In Chlorobium limicola (strain DSM 245 / NBRC 103803 / 6330), this protein is Acetyl-coenzyme A carboxylase carboxyl transferase subunit alpha.